Consider the following 106-residue polypeptide: Protein aveugle (106 aa).

One can recognise an SAM domain in the interval 26–91; that stretch reads WTVSDVLKWY…WREIVKQRLK (66 aa).

As to quaternary structure, interacts with the SAM domain of cnk.

It is found in the cytoplasm. It localises to the membrane. Its function is as follows. Required for normal photoreceptor differentiation between Ras and Raf for EGFR signaling in the eye and for mitogen-activated protein kinase phosphorylation. Probably acts together with Cnk to promote Raf activation, perhaps by recruiting an activating kinase. The polypeptide is Protein aveugle (ave) (Drosophila melanogaster (Fruit fly)).